The chain runs to 200 residues: Superoxide dismutase [Mn] 1 (200 aa).

The Mn(2+) site is built by histidine 29, histidine 76, aspartate 158, and histidine 162.

This sequence belongs to the iron/manganese superoxide dismutase family. The cofactor is Mn(2+).

It catalyses the reaction 2 superoxide + 2 H(+) = H2O2 + O2. Destroys superoxide anion radicals which are normally produced within the cells and which are toxic to biological systems. In Haloferax volcanii (strain ATCC 29605 / DSM 3757 / JCM 8879 / NBRC 14742 / NCIMB 2012 / VKM B-1768 / DS2) (Halobacterium volcanii), this protein is Superoxide dismutase [Mn] 1 (sod1).